A 124-amino-acid polypeptide reads, in one-letter code: Glycine cleavage system H protein (124 aa).

In terms of domain architecture, Lipoyl-binding spans 19–101 (TGTVGITDYA…AGKGWFLQIK (83 aa)). Position 60 is an N6-lipoyllysine (Lys-60).

It belongs to the GcvH family. The glycine cleavage system is composed of four proteins: P, T, L and H. (R)-lipoate is required as a cofactor.

Its function is as follows. The glycine cleavage system catalyzes the degradation of glycine. The H protein shuttles the methylamine group of glycine from the P protein to the T protein. The sequence is that of Glycine cleavage system H protein from Beijerinckia indica subsp. indica (strain ATCC 9039 / DSM 1715 / NCIMB 8712).